Here is a 387-residue protein sequence, read N- to C-terminus: EARP-interacting protein homolog (387 aa).

WD repeat units lie at residues threonine 132–valine 172, lysine 182–cysteine 222, alanine 226–lysine 266, glutamate 270–phenylalanine 310, and glutamate 345–isoleucine 385.

This sequence belongs to the WD repeat EIPR1 family.

In Gekko japonicus (Schlegel's Japanese gecko), this protein is EARP-interacting protein homolog.